Reading from the N-terminus, the 196-residue chain is NADH dehydrogenase [ubiquinone] 1 alpha subcomplex assembly factor 3 (196 aa).

The transit peptide at 1–93 directs the protein to the mitochondrion; sequence MIARTLRTVG…RSVLSWNVNS (93 aa).

Belongs to the NDUFAF3 family. Together with NdufAF4 associates with mitochondrial complex I assembly intermediates during its biogenesis.

It is found in the mitochondrion. Involved in the assembly of mitochondrial NADH:ubiquinone oxidoreductase complex (complex I). Together with NdufAF4, involved in biogenesis of complex 1 modules N, Q and P-peripheral, but not the P-distal module. Required for recruitment of the complex I assembly factor Timmdc1 to complex 1 assembly intermediates. The protein is NADH dehydrogenase [ubiquinone] 1 alpha subcomplex assembly factor 3 of Drosophila melanogaster (Fruit fly).